Here is a 501-residue protein sequence, read N- to C-terminus: Dipeptide and tripeptide permease A (501 aa).

The Cytoplasmic segment spans residues 1–21 (MSTANKKPTESVSLNAFKQPK). Residues 22 to 44 (AFYLIFSIELWERFGYYGLQGIM) form a helical membrane-spanning segment. At 45 to 59 (AVYLVKQLGMSEADS) the chain is on the periplasmic side. A helical transmembrane segment spans residues 60 to 80 (ITLFSSFSALVYGLVAIGGWL). Residues 81 to 89 (GDKILGTKR) are Cytoplasmic-facing. A helical transmembrane segment spans residues 90-110 (VIMLGAVVLAIGYALVAWSGH). A topological domain (periplasmic) is located at residue aspartate 111. A helical transmembrane segment spans residues 112–132 (AGIVYMGMAAIAVGNGLFKAN). At 133 to 153 (PSSLLSTCYAKDDPRLDGAFT) the chain is on the cytoplasmic side. A helical transmembrane segment spans residues 154-174 (MYYMSVNIGSFFSMLATPWLA). Residues 175 to 178 (ARYG) are Periplasmic-facing. A helical transmembrane segment spans residues 179–199 (WSTAFALSVVGMLITVVNFAF). Residues 200–219 (CQRWVKSYGSKPDFEPINFR) lie on the Cytoplasmic side of the membrane. The helical transmembrane segment at 220 to 240 (NLLLTIVGIVVLIAVATWLLH) threads the bilayer. Topologically, residues 241-246 (NQDIAR) are periplasmic. Residues 247-267 (MVLGVIALGIVIIFGKEAFSM) traverse the membrane as a helical segment. Topologically, residues 268-274 (HGAARRK) are cytoplasmic. Residues 275-295 (MIVAFILMLQAIIFFVLYSQM) traverse the membrane as a helical segment. The Periplasmic portion of the chain corresponds to 296-320 (PTSLNFFAIRNVEHSILGIAFEPEQ). A helical transmembrane segment spans residues 321-341 (YQALNPFWIIIGSPILAAIYN). The Cytoplasmic segment spans residues 342–352 (RMGDTLPMPMK). Residues 353–373 (FAIGMVLCSGAFLILPLGAKF) traverse the membrane as a helical segment. Over 374 to 383 (ANDAGIVSVN) the chain is Periplasmic. Residues 384-404 (WLIASYGLQSIGELMISGLGL) form a helical membrane-spanning segment. At 405–414 (AMVAQLVPQR) the chain is on the cytoplasmic side. A helical transmembrane segment spans residues 415 to 435 (LMGFIMGSWFLTTAGANIIGG). Topologically, residues 436 to 459 (YVANLMAVPSDVTDPLMSLEVYGR) are periplasmic. Residues 460–480 (VFMQIGIATAVIAVLMLLTAP) form a helical membrane-spanning segment. The Cytoplasmic segment spans residues 481–501 (KLNRMTQDDDTAEKGSKAATV).

Belongs to the major facilitator superfamily. Proton-dependent oligopeptide transporter (POT/PTR) (TC 2.A.17) family. DtpA subfamily.

The protein localises to the cell inner membrane. Functionally, proton-dependent permease that transports di- and tripeptides. In Salmonella typhimurium (strain LT2 / SGSC1412 / ATCC 700720), this protein is Dipeptide and tripeptide permease A.